We begin with the raw amino-acid sequence, 383 residues long: Probable butyrate kinase (383 aa).

This sequence belongs to the acetokinase family.

The protein resides in the cytoplasm. It catalyses the reaction butanoate + ATP = butanoyl phosphate + ADP. This chain is Probable butyrate kinase, found in Deinococcus radiodurans (strain ATCC 13939 / DSM 20539 / JCM 16871 / CCUG 27074 / LMG 4051 / NBRC 15346 / NCIMB 9279 / VKM B-1422 / R1).